Reading from the N-terminus, the 344-residue chain is MMVIRPVERSDVSALMQLASKTGGGLTSLPANEATLSARIERAIKTWQGELPKSEQGYVFVLEDSETGTVAGICAIEVAVGLNDPWHNYRVGTLVHASKELNVYNALPTLFLSNDHTGSSELCTLFLDPDWRKEGNGYLLSKSRFMFMAAFRDKFNDKVVAEMRGVIDEHGYSPFWQSLGKRFFSMDFSRADFLCGTGQKAFIAELMPKHPIYTHFLSQEAQDVIGQVHPQTAPARAVLEKEGFRYRNYIDIFDGGPTLECDIDRVRAIRKSRLVEVAEGQPAQGDFPACLVANENYHHFRVVLARTDPATERLILTAAQLDALKCHAGDRVRLVRLCAVEKTA.

Leucine 125 contacts succinyl-CoA. The active-site Proton donor is the histidine 229.

Belongs to the arginine N-succinyltransferase family.

The catalysed reaction is succinyl-CoA + L-arginine = N(2)-succinyl-L-arginine + CoA + H(+). The protein operates within amino-acid degradation; L-arginine degradation via AST pathway; L-glutamate and succinate from L-arginine: step 1/5. Functionally, catalyzes the transfer of succinyl-CoA to arginine to produce N(2)-succinylarginine. The protein is Arginine N-succinyltransferase of Shigella boydii serotype 4 (strain Sb227).